A 235-amino-acid polypeptide reads, in one-letter code: Segregation and condensation protein A (235 aa).

The protein belongs to the ScpA family. Component of a cohesin-like complex composed of ScpA, ScpB and the Smc homodimer, in which ScpA and ScpB bind to the head domain of Smc. The presence of the three proteins is required for the association of the complex with DNA.

It is found in the cytoplasm. Its function is as follows. Participates in chromosomal partition during cell division. May act via the formation of a condensin-like complex containing Smc and ScpB that pull DNA away from mid-cell into both cell halves. The protein is Segregation and condensation protein A of Streptococcus agalactiae serotype III (strain NEM316).